The primary structure comprises 100 residues: Large ribosomal subunit protein bL28 (100 aa).

Positions 1–21 (MSRVCDITGQGKSFGNKVSHS) are disordered. The span at 10–19 (QGKSFGNKVS) shows a compositional bias: polar residues.

This sequence belongs to the bacterial ribosomal protein bL28 family.

The sequence is that of Large ribosomal subunit protein bL28 from Ehrlichia canis (strain Jake).